An 89-amino-acid polypeptide reads, in one-letter code: Defensin-like protein 103 (89 aa).

The signal sequence occupies residues 1 to 24 (MAITRKNLVAFCFTILFIISSIHC). 4 disulfides stabilise this stretch: Cys46–Cys84, Cys52–Cys75, Cys61–Cys82, and Cys65–Cys83.

This sequence belongs to the DEFL family.

It is found in the secreted. In Arabidopsis thaliana (Mouse-ear cress), this protein is Defensin-like protein 103.